Here is a 320-residue protein sequence, read N- to C-terminus: Aspartate carbamoyltransferase catalytic subunit (320 aa).

Residues Arg70 and Thr71 each contribute to the carbamoyl phosphate site. L-aspartate is bound at residue Lys98. 3 residues coordinate carbamoyl phosphate: Arg120, His149, and Gln152. Residues Arg182 and Arg237 each contribute to the L-aspartate site. Residues Gly278 and Pro279 each contribute to the carbamoyl phosphate site.

It belongs to the aspartate/ornithine carbamoyltransferase superfamily. ATCase family. Heterododecamer (2C3:3R2) of six catalytic PyrB chains organized as two trimers (C3), and six regulatory PyrI chains organized as three dimers (R2).

The catalysed reaction is carbamoyl phosphate + L-aspartate = N-carbamoyl-L-aspartate + phosphate + H(+). It functions in the pathway pyrimidine metabolism; UMP biosynthesis via de novo pathway; (S)-dihydroorotate from bicarbonate: step 2/3. Its function is as follows. Catalyzes the condensation of carbamoyl phosphate and aspartate to form carbamoyl aspartate and inorganic phosphate, the committed step in the de novo pyrimidine nucleotide biosynthesis pathway. The sequence is that of Aspartate carbamoyltransferase catalytic subunit from Vesicomyosocius okutanii subsp. Calyptogena okutanii (strain HA).